A 333-amino-acid polypeptide reads, in one-letter code: Homeobox protein Hox-D13 (333 aa).

The segment at 1-24 (MDGLRTDGGAAGAAPASSSSSSSV) is disordered. The span at 12–24 (GAAPASSSSSSSV) shows a compositional bias: low complexity. The homeobox DNA-binding region spans 266-325 (GRKKRVPYTKLQLKELENEYAINKFINKDKRRRISAATNLSERQVTIWFQNRRVKDKKIV).

Belongs to the Abd-B homeobox family.

It is found in the nucleus. Its function is as follows. Sequence-specific transcription factor that binds gene promoters and activates their transcription. Part of a developmental regulatory system that provides cells with specific positional identities on the anterior-posterior axis. This chain is Homeobox protein Hox-D13 (HOXD13), found in Carollia perspicillata (Seba's short-tailed bat).